Consider the following 291-residue polypeptide: Sesquiterpene cyclase astC (291 aa).

This sequence belongs to the HAD-like hydrolase superfamily.

It carries out the reaction (2E,6E)-farnesyl diphosphate = (S,S)-drim-8-en-11-yl diphosphate. It functions in the pathway secondary metabolite biosynthesis; terpenoid biosynthesis. In terms of biological role, sesquiterpene cyclase; part of the gene cluster that mediates the biosynthesis of astellolides, drimane-type sesquiterpene esters that show antimicrobial, anti-inflammatory, and anti-tumor activities. The first step in astellolide biosynthesis is performed by the sesquiterpene cyclase astC that catalyzes the formation of drimanyl pyrophosphate from farnesyl pyrophosphate. Drimanyl pyrophosphate is then dephosphorylated by the sesquiterpene phosphatase astI to produce drimanyl monophosphate which is further dephosphorylated to drim-8-ene-11-ol by atsK. Drim-8-ene-11-ol is converted to confertifolin, probably by the cytochrome P450 monooxygenase astD and/or the dehydrogenase astE. The cytochrome P450 monooxygenases astB, astF and astJ then hydroxylate confertifolin at C6, C14, or C15 to form trihydroxy confertifolin. The nonribosomal peptide synthetase astA catalyzes ester bond formation between trihydroxy contifolin and benzoic acid (BA) or 4-hydroxy benzoic acid (4HBA), leading to the formation of dideacetyl astellolides A and B, respectively. Finally, the O-acetyltransferase astG converts dideacetyl astellolides A and B into deacetyl astellolides A and B. In Aspergillus oryzae (strain ATCC 42149 / RIB 40) (Yellow koji mold), this protein is Sesquiterpene cyclase astC.